A 440-amino-acid chain; its full sequence is ATP-dependent protease ATPase subunit HslU (440 aa).

Residues valine 18, 60–65, aspartate 253, glutamate 318, and arginine 390 contribute to the ATP site; that span reads GVGKTE.

Belongs to the ClpX chaperone family. HslU subfamily. As to quaternary structure, a double ring-shaped homohexamer of HslV is capped on each side by a ring-shaped HslU homohexamer. The assembly of the HslU/HslV complex is dependent on binding of ATP.

The protein resides in the cytoplasm. In terms of biological role, ATPase subunit of a proteasome-like degradation complex; this subunit has chaperone activity. The binding of ATP and its subsequent hydrolysis by HslU are essential for unfolding of protein substrates subsequently hydrolyzed by HslV. HslU recognizes the N-terminal part of its protein substrates and unfolds these before they are guided to HslV for hydrolysis. This chain is ATP-dependent protease ATPase subunit HslU, found in Methylococcus capsulatus (strain ATCC 33009 / NCIMB 11132 / Bath).